The chain runs to 225 residues: uncharacterized protein (225 aa).

The next 4 membrane-spanning stretches (helical) occupy residues 40–60 (LISL…LSIV), 63–83 (LAFF…PFSF), 151–171 (LSET…LTIL), and 176–196 (IFSL…IVSL).

It is found in the membrane. This is an uncharacterized protein from Saccharomyces cerevisiae (strain ATCC 204508 / S288c) (Baker's yeast).